Reading from the N-terminus, the 219-residue chain is 16S rRNA (adenine(1408)-N(1))-methyltransferase (219 aa).

Residues Gly32, Asn38, Asp55, 87–88 (AE), 104–109 (LFPWGT), and 195–197 (SLW) contribute to the S-adenosyl-L-methionine site.

Belongs to the methyltransferase superfamily. Kanamycin-apramycin resistance family.

The enzyme catalyses adenosine(1408) in 16S rRNA + S-adenosyl-L-methionine = N(1)-methyladenosine(1408) in 16S rRNA + S-adenosyl-L-homocysteine + H(+). Specifically methylates the N(1) position of adenine 1408 in 16S rRNA. Confers resistance to various aminoglycosides, including kanamycin, neomycin, apramycin, ribostamycin and gentamicin. Methylates only fully assembled 30S subunits. The sequence is that of 16S rRNA (adenine(1408)-N(1))-methyltransferase (npmA) from Escherichia coli.